We begin with the raw amino-acid sequence, 1176 residues long: DNA-directed RNA polymerase subunit beta (1176 aa).

Residues 13–30 show a composition bias toward polar residues; that stretch reads TDASLHQGRPQSSSNSSV. Residues 13-35 are disordered; that stretch reads TDASLHQGRPQSSSNSSVPGAPN.

The protein belongs to the RNA polymerase beta chain family. As to quaternary structure, the RNAP catalytic core consists of 2 alpha, 1 beta, 1 beta' and 1 omega subunit. When a sigma factor is associated with the core the holoenzyme is formed, which can initiate transcription.

It carries out the reaction RNA(n) + a ribonucleoside 5'-triphosphate = RNA(n+1) + diphosphate. Its function is as follows. DNA-dependent RNA polymerase catalyzes the transcription of DNA into RNA using the four ribonucleoside triphosphates as substrates. The sequence is that of DNA-directed RNA polymerase subunit beta from Mycobacterium ulcerans (strain Agy99).